Here is a 226-residue protein sequence, read N- to C-terminus: UPF0758 protein SPT_1135 (226 aa).

The MPN domain maps to 103–225 (SILSSQKLAK…YFSYREKTDL (123 aa)). Residues histidine 174, histidine 176, and aspartate 187 each contribute to the Zn(2+) site. The short motif at 174–187 (HNHPSGAVAPSQND) is the JAMM motif element.

The protein belongs to the UPF0758 family.

This is UPF0758 protein SPT_1135 from Streptococcus pneumoniae (strain Taiwan19F-14).